A 315-amino-acid polypeptide reads, in one-letter code: THO complex subunit 3 (315 aa).

WD repeat units follow at residues 18–57, 64–104, 106–145, 189–228, 231–270, and 272–311; these read GHKK…HSKA, GHTD…CTQQ, ELSG…PLHR, AHTA…CLRT, KLEW…TVHQ, and PCRA…RIFG.

The protein belongs to the THOC3 family. Component of the THO complex, which is composed of THO1, THO2, THO3, THO5, THO6 and THO7.

It localises to the nucleus. Acts as a component of the THO subcomplex of the TREX complex which is thought to couple mRNA transcription, processing and nuclear export. Contributes to the integrity of the endogenous trans-acting small interfering RNA (ta-siRNA) pathway. May process or transport a long RNA molecule so that it can be a template for secondary siRNA production. May participate in the trafficking of siRNA precursors to the ARGONAUTE catalytic center. Required for the generation of functional messenger ribonucleoproteins (mRNPs). The polypeptide is THO complex subunit 3 (THO3) (Arabidopsis thaliana (Mouse-ear cress)).